We begin with the raw amino-acid sequence, 810 residues long: F-BAR domain only protein 2 (810 aa).

One can recognise an F-BAR domain in the interval 3–250 (MAYFVENFWG…NMANTTVESL (248 aa)). Positions 3-274 (MAYFVENFWG…PGLIEFEECD (272 aa)) are mediates dimerization and binding to membranes enriched in Pi(4,5)-P2 and induces their tubulation. The stretch at 87–156 (HLDLVRKLQE…CVEQERLKKE (70 aa)) forms a coiled coil. Lysine 297 is covalently cross-linked (Glycyl lysine isopeptide (Lys-Gly) (interchain with G-Cter in SUMO2)). The interval 301 to 352 (DAESVECPDADSLNIPDVDEEGYSIKPETNQNDTKENHFYSSSDSDSEDEEP) is disordered. Serine 312 is subject to Phosphoserine. Threonine 385 carries the post-translational modification Phosphothreonine. Phosphoserine is present on residues serine 387, serine 394, and serine 403. The disordered stretch occupies residues 404 to 537 (NEELTKSKPS…VSRGPSPVSL (134 aa)). A compositionally biased stretch (low complexity) spans 433–456 (PSLDSSSSSSLTSSSSARPTTPLS). Residues serine 488, serine 493, serine 496, serine 508, serine 510, serine 511, and serine 533 each carry the phosphoserine modification. Positions 502-521 (PLARAESSSSISSSASLSAA) are enriched in low complexity. Residues 521–810 (ANTPTVGVSR…FATGRYLADC (290 aa)) are mediates interaction with DAB2, EPS15, EPS15R and ITSN1. One can recognise an MHD domain in the interval 542 to 809 (TLPVAVALTE…RFATGRYLAD (268 aa)).

Belongs to the FCHO family. As to quaternary structure, homodimer; disulfide-linked. May form homotetramer. Interacts with AP2A1. Interacts with EPS15, EPS15R, ITSN1 and ITSN2; recruit those scaffolding proteins which in turn may interact with the adaptor protein complex AP-2 at the plasma membrane. Interacts with DAB2 (via DPF motifs); mediates LDL receptor/LDLR endocytosis. Post-translationally, ubiquitinated. Mainly undergoes monoubiquitination but also polyubiquitination.

Its subcellular location is the membrane. It localises to the clathrin-coated pit. Its function is as follows. Functions in an early step of clathrin-mediated endocytosis. Has both a membrane binding/bending activity and the ability to recruit proteins essential to the formation of functional clathrin-coated pits. Has a lipid-binding activity with a preference for membranes enriched in phosphatidylserine and phosphoinositides (Pi(4,5) biphosphate) like the plasma membrane. Its membrane-bending activity might be important for the subsequent action of clathrin and adaptors in the formation of clathrin-coated vesicles. Involved in adaptor protein complex AP-2-dependent endocytosis of the transferrin receptor, it also functions in the AP-2-independent endocytosis of the LDL receptor. The polypeptide is F-BAR domain only protein 2 (FCHO2) (Homo sapiens (Human)).